Consider the following 101-residue polypeptide: Co-chaperonin GroES (101 aa).

Belongs to the GroES chaperonin family. As to quaternary structure, heptamer of 7 subunits arranged in a ring. Interacts with the chaperonin GroEL.

Its subcellular location is the cytoplasm. Functionally, together with the chaperonin GroEL, plays an essential role in assisting protein folding. The GroEL-GroES system forms a nano-cage that allows encapsulation of the non-native substrate proteins and provides a physical environment optimized to promote and accelerate protein folding. GroES binds to the apical surface of the GroEL ring, thereby capping the opening of the GroEL channel. In Thermus thermophilus (strain ATCC BAA-163 / DSM 7039 / HB27), this protein is Co-chaperonin GroES.